The following is a 285-amino-acid chain: Putative sugar uptake protein lmo0424 (285 aa).

Transmembrane regions (helical) follow at residues 2–21, 31–50, 55–77, 111–133, 146–168, 172–194, 207–229, 233–255, and 262–284; these read SIYL…PIIA, QLLG…FWIL, TVLS…LLQF, WQTV…GVVM, SVSF…YVVT, FDVT…AIGI, VTFN…LATA, VATS…ILIF, and LEWT…LSLL.

Belongs to the GRP transporter (TC 2.A.7.5) family.

The protein resides in the cell membrane. The sequence is that of Putative sugar uptake protein lmo0424 from Listeria monocytogenes serovar 1/2a (strain ATCC BAA-679 / EGD-e).